The chain runs to 91 residues: Small ribosomal subunit protein uS19 (91 aa).

It belongs to the universal ribosomal protein uS19 family.

Its function is as follows. Protein S19 forms a complex with S13 that binds strongly to the 16S ribosomal RNA. The protein is Small ribosomal subunit protein uS19 of Methylibium petroleiphilum (strain ATCC BAA-1232 / LMG 22953 / PM1).